A 475-amino-acid polypeptide reads, in one-letter code: UDP-N-acetylmuramate--L-alanine ligase (475 aa).

An ATP-binding site is contributed by 121-127 (GTHGKTT).

The protein belongs to the MurCDEF family.

Its subcellular location is the cytoplasm. The catalysed reaction is UDP-N-acetyl-alpha-D-muramate + L-alanine + ATP = UDP-N-acetyl-alpha-D-muramoyl-L-alanine + ADP + phosphate + H(+). Its pathway is cell wall biogenesis; peptidoglycan biosynthesis. Functionally, cell wall formation. The chain is UDP-N-acetylmuramate--L-alanine ligase from Salinibacter ruber (strain DSM 13855 / M31).